The sequence spans 232 residues: Ubiquinone biosynthesis O-methyltransferase (232 aa).

Residues arginine 36, glycine 55, aspartate 76, and methionine 120 each coordinate S-adenosyl-L-methionine.

It belongs to the methyltransferase superfamily. UbiG/COQ3 family.

It carries out the reaction a 3-demethylubiquinol + S-adenosyl-L-methionine = a ubiquinol + S-adenosyl-L-homocysteine + H(+). The catalysed reaction is a 3-(all-trans-polyprenyl)benzene-1,2-diol + S-adenosyl-L-methionine = a 2-methoxy-6-(all-trans-polyprenyl)phenol + S-adenosyl-L-homocysteine + H(+). Its pathway is cofactor biosynthesis; ubiquinone biosynthesis. Its function is as follows. O-methyltransferase that catalyzes the 2 O-methylation steps in the ubiquinone biosynthetic pathway. The chain is Ubiquinone biosynthesis O-methyltransferase from Burkholderia orbicola (strain MC0-3).